We begin with the raw amino-acid sequence, 88 residues long: Cell division topological specificity factor (88 aa).

This sequence belongs to the MinE family.

Its function is as follows. Prevents the cell division inhibition by proteins MinC and MinD at internal division sites while permitting inhibition at polar sites. This ensures cell division at the proper site by restricting the formation of a division septum at the midpoint of the long axis of the cell. This is Cell division topological specificity factor from Methylibium petroleiphilum (strain ATCC BAA-1232 / LMG 22953 / PM1).